Reading from the N-terminus, the 180-residue chain is Inner membrane-spanning protein YciB (180 aa).

The next 5 membrane-spanning stretches (helical) occupy residues 25 to 45, 49 to 69, 76 to 96, 118 to 138, and 150 to 170; these read QNAT…CYII, VSKL…ITLI, IKIK…MSGI, ITLS…NEIV, and FKVF…LPLL.

This sequence belongs to the YciB family.

Its subcellular location is the cell inner membrane. In terms of biological role, plays a role in cell envelope biogenesis, maintenance of cell envelope integrity and membrane homeostasis. The protein is Inner membrane-spanning protein YciB of Rickettsia akari (strain Hartford).